Here is a 212-residue protein sequence, read N- to C-terminus: Orotate phosphoribosyltransferase (212 aa).

Residues Arg97, Lys101, His103, and 123-131 (EDLISTGGS) contribute to the 5-phospho-alpha-D-ribose 1-diphosphate site. Ser127 lines the orotate pocket.

This sequence belongs to the purine/pyrimidine phosphoribosyltransferase family. PyrE subfamily. In terms of assembly, homodimer. Mg(2+) is required as a cofactor.

The catalysed reaction is orotidine 5'-phosphate + diphosphate = orotate + 5-phospho-alpha-D-ribose 1-diphosphate. It participates in pyrimidine metabolism; UMP biosynthesis via de novo pathway; UMP from orotate: step 1/2. Functionally, catalyzes the transfer of a ribosyl phosphate group from 5-phosphoribose 1-diphosphate to orotate, leading to the formation of orotidine monophosphate (OMP). The polypeptide is Orotate phosphoribosyltransferase (Bacteroides thetaiotaomicron (strain ATCC 29148 / DSM 2079 / JCM 5827 / CCUG 10774 / NCTC 10582 / VPI-5482 / E50)).